A 260-amino-acid chain; its full sequence is 3'-5' ssDNA/RNA exonuclease TatD (260 aa).

Residues E92, H128, and H153 each contribute to the a divalent metal cation site.

It belongs to the metallo-dependent hydrolases superfamily. TatD-type hydrolase family. TatD subfamily. As to quaternary structure, monomer. The cofactor is Mg(2+).

The protein resides in the cytoplasm. In terms of biological role, 3'-5' exonuclease that prefers single-stranded DNA and RNA. May play a role in the H(2)O(2)-induced DNA damage repair. In Pectobacterium carotovorum subsp. carotovorum (strain PC1), this protein is 3'-5' ssDNA/RNA exonuclease TatD.